Consider the following 499-residue polypeptide: Circadian clock oscillator protein KaiC (499 aa).

KaiC domains follow at residues 1 to 243 and 257 to 499; these read MQSS…VSVF and VRIS…DERA. ATP-binding residues include glycine 45, threonine 46, glycine 47, lysine 48, threonine 49, serine 85, lysine 220, leucine 221, arginine 222, threonine 224, histidine 226, threonine 286, glycine 287, threonine 288, glycine 289, lysine 290, threonine 291, and leucine 292. Threonine 49 contacts Mg(2+). Threonine 291 serves as a coordination point for Mg(2+). Glutamate 314 lines the Mg(2+) pocket. Position 327 (tryptophan 327) interacts with ATP. Position 427 is a phosphoserine; by autocatalysis (serine 427). At threonine 428 the chain carries Phosphothreonine; by autocatalysis. ATP contacts are provided by arginine 447, lysine 453, methionine 454, arginine 455, serine 457, histidine 459, and lysine 461.

Belongs to the KaiC family. In terms of assembly, homohexamer; hexamerization is dependent on ATP-binding. Component of the KaiBC complex. KaiC interacts with SasA, activating its autokinase function and leading to RpaA activation. Mg(2+) is required as a cofactor. Phosphorylated on serine and threonine residues by autocatalysis. Has a 4 step phosphorylation cycle; the autokinase acts first on Thr-428, then Ser-427. When Ser-427 is modified KaiC switches to an autophosphatase mode, acting first on phospho-Thr-428 then phospho-Ser-427.

It carries out the reaction L-seryl-[protein] + ATP = O-phospho-L-seryl-[protein] + ADP + H(+). The enzyme catalyses L-threonyl-[protein] + ATP = O-phospho-L-threonyl-[protein] + ADP + H(+). The catalysed reaction is ATP + H2O = ADP + phosphate + H(+). Central component of the KaiBC oscillator complex, which constitutes the main circadian regulator in cyanobacteria. Its composition changes during the circadian cycle to control KaiC phosphorylation. Autophosphorylates and has a weak ATPase activity; ATPase activity defines the circadian period. This chain is Circadian clock oscillator protein KaiC, found in Prochlorococcus marinus (strain MIT 9313).